Reading from the N-terminus, the 204-residue chain is ATP-dependent Clp protease proteolytic subunit (204 aa).

Ser102 functions as the Nucleophile in the catalytic mechanism. Residue His127 is part of the active site.

This sequence belongs to the peptidase S14 family. Fourteen ClpP subunits assemble into 2 heptameric rings which stack back to back to give a disk-like structure with a central cavity, resembling the structure of eukaryotic proteasomes.

The protein localises to the cytoplasm. It carries out the reaction Hydrolysis of proteins to small peptides in the presence of ATP and magnesium. alpha-casein is the usual test substrate. In the absence of ATP, only oligopeptides shorter than five residues are hydrolyzed (such as succinyl-Leu-Tyr-|-NHMec, and Leu-Tyr-Leu-|-Tyr-Trp, in which cleavage of the -Tyr-|-Leu- and -Tyr-|-Trp bonds also occurs).. Cleaves peptides in various proteins in a process that requires ATP hydrolysis. Has a chymotrypsin-like activity. Plays a major role in the degradation of misfolded proteins. This chain is ATP-dependent Clp protease proteolytic subunit, found in Neisseria meningitidis serogroup C (strain 053442).